A 779-amino-acid chain; its full sequence is Phosphoribosylformylglycinamidine synthase subunit PurL (779 aa).

His-52 is an active-site residue. ATP is bound by residues Tyr-55 and Lys-94. Glu-96 serves as a coordination point for Mg(2+). Substrate is bound by residues Ser-97–His-100 and Arg-119. The active-site Proton acceptor is the His-98. Asp-120 is a Mg(2+) binding site. Residue Gln-243 participates in substrate binding. Asp-271 contacts Mg(2+). Glu-315–Gln-317 serves as a coordination point for substrate. Positions 523 and 560 each coordinate ATP. A Mg(2+)-binding site is contributed by Asn-561. Ser-563 contributes to the substrate binding site.

Belongs to the FGAMS family. Monomer. Part of the FGAM synthase complex composed of 1 PurL, 1 PurQ and 2 PurS subunits.

It localises to the cytoplasm. It catalyses the reaction N(2)-formyl-N(1)-(5-phospho-beta-D-ribosyl)glycinamide + L-glutamine + ATP + H2O = 2-formamido-N(1)-(5-O-phospho-beta-D-ribosyl)acetamidine + L-glutamate + ADP + phosphate + H(+). The protein operates within purine metabolism; IMP biosynthesis via de novo pathway; 5-amino-1-(5-phospho-D-ribosyl)imidazole from N(2)-formyl-N(1)-(5-phospho-D-ribosyl)glycinamide: step 1/2. In terms of biological role, part of the phosphoribosylformylglycinamidine synthase complex involved in the purines biosynthetic pathway. Catalyzes the ATP-dependent conversion of formylglycinamide ribonucleotide (FGAR) and glutamine to yield formylglycinamidine ribonucleotide (FGAM) and glutamate. The FGAM synthase complex is composed of three subunits. PurQ produces an ammonia molecule by converting glutamine to glutamate. PurL transfers the ammonia molecule to FGAR to form FGAM in an ATP-dependent manner. PurS interacts with PurQ and PurL and is thought to assist in the transfer of the ammonia molecule from PurQ to PurL. The protein is Phosphoribosylformylglycinamidine synthase subunit PurL of Prochlorococcus marinus (strain MIT 9312).